The chain runs to 365 residues: WAT1-related protein At4g01440 (365 aa).

A run of 10 helical transmembrane segments spans residues 8–28 (WTPV…NALV), 40–60 (VIAT…AFFW), 72–92 (ILVQ…YFFL), 101–121 (TLAC…ALIF), 132–152 (AGMG…LLTM), 181–201 (WIIG…WMLI), 213–233 (YSST…LSLI), 249–269 (IVTI…GTSW), 277–297 (IFTS…DFLI), and 302–322 (IFLG…IFLL). EamA domains follow at residues 25 to 144 (NALV…LICI) and 196 to 321 (GSWM…YIFL).

The protein belongs to the drug/metabolite transporter (DMT) superfamily. Plant drug/metabolite exporter (P-DME) (TC 2.A.7.4) family.

It is found in the membrane. The chain is WAT1-related protein At4g01440 from Arabidopsis thaliana (Mouse-ear cress).